We begin with the raw amino-acid sequence, 186 residues long: Outer-membrane lipoprotein LolB (186 aa).

A signal peptide spans 1–16 (MRRLAVIASLAWALGG). Residue cysteine 17 is the site of N-palmitoyl cysteine attachment. Cysteine 17 is lipidated: S-diacylglycerol cysteine.

It belongs to the LolB family. Monomer.

It localises to the cell outer membrane. Its function is as follows. Plays a critical role in the incorporation of lipoproteins in the outer membrane after they are released by the LolA protein. This is Outer-membrane lipoprotein LolB from Thiobacillus denitrificans (strain ATCC 25259 / T1).